Reading from the N-terminus, the 226-residue chain is Putative ankyrin repeat protein RF_0939 (226 aa).

ANK repeat units lie at residues 56–86 (VSTT…NVNM), 91–120 (FKDT…AVNG), 125–154 (LLGP…AVDQ), and 157–194 (SGET…DTNA).

The polypeptide is Putative ankyrin repeat protein RF_0939 (Rickettsia felis (strain ATCC VR-1525 / URRWXCal2) (Rickettsia azadi)).